Here is a 220-residue protein sequence, read N- to C-terminus: Iron-sulfur cluster repair protein YtfE (220 aa).

The protein belongs to the RIC family. YtfE subfamily. In terms of assembly, homodimer.

It is found in the cytoplasm. Its function is as follows. Di-iron-containing protein involved in the repair of iron-sulfur clusters damaged by oxidative and nitrosative stress conditions. The sequence is that of Iron-sulfur cluster repair protein YtfE from Shigella boydii serotype 4 (strain Sb227).